A 588-amino-acid polypeptide reads, in one-letter code: Hyaluronan synthase 1 (588 aa).

Residues 1 to 28 (MKEKAAETMEIPEGIPKDLEPKHPTLWR) lie on the Cytoplasmic side of the membrane. A helical transmembrane segment spans residues 29-49 (IIYYSFGVVLLATITAAYVAE). At 50-61 (FQVLKHEAILFS) the chain is on the extracellular side. The helical transmembrane segment at 62-82 (LGLYGLAMLLHLMMQSLFAFL) threads the bilayer. The Cytoplasmic portion of the chain corresponds to 83-411 (EIRRVNKSEL…IWMTYESVVS (329 aa)). A helical membrane pass occupies residues 412-432 (FIFPFFITATVIRLIYAGTIW). A topological domain (extracellular) is located at residue Asn-433. Residues 434 to 454 (VVWLLLCIQIMSLFKSIYACW) form a helical membrane-spanning segment. Residues 455–456 (LR) are Cytoplasmic-facing. A helical membrane pass occupies residues 457–477 (GNFIMLLMSLYSMLYMTGLLP). At 478–505 (SKYFALLTLNKTGWGTSGRKKIVGNYMP) the chain is on the extracellular side. A helical membrane pass occupies residues 506-526 (ILPLSIWAAVLCGGVGYSIYM). Over 527–543 (DCQNDWSTPEKQKEMYH) the chain is Cytoplasmic. The chain crosses the membrane as a helical span at residues 544–564 (LLYGCVGYVMYWVIMAVMYWV). Topologically, residues 565–588 (WVKRCCRKRSQTVTLVHDIPDMCV) are extracellular.

The protein belongs to the NodC/HAS family. The cofactor is Mg(2+). Expression moves as a gradient through the embryo. The mRNA is first expressed in the animal region of the blastula, and by early gastrula is found everywhere except in the outer layer of the dorsal blastopore lip. By mid-gastrula, protein is present in the inner ectodermal layer and the endoderm, then disappears from dorsal ectoderm as the neural plate is induced and later decays in a dorsoventral direction. Last expressed in ventral regions of the gut at the tailbud stage (at protein level).

The protein localises to the membrane. It carries out the reaction [hyaluronan](n) + UDP-N-acetyl-alpha-D-glucosamine = N-acetyl-beta-D-glucosaminyl-(1-&gt;4)-[hyaluronan](n) + UDP + H(+). The catalysed reaction is N-acetyl-beta-D-glucosaminyl-(1-&gt;4)-[hyaluronan](n) + UDP-alpha-D-glucuronate = [hyaluronan](n+1) + UDP + H(+). It functions in the pathway glycan biosynthesis; hyaluronan biosynthesis. Catalyzes the addition of GlcNAc or GlcUA monosaccharides to the nascent hyaluronan polymer. Therefore, it is essential to hyaluronan synthesis a major component of most extracellular matrices that has a structural role in tissues architectures and regulates cell adhesion, migration and differentiation. Also able to catalyze the synthesis of chito-oligosaccharide depending on the substrate. The protein is Hyaluronan synthase 1 (has1) of Xenopus laevis (African clawed frog).